Consider the following 149-residue polypeptide: Large ribosomal subunit protein uL13 (149 aa).

This sequence belongs to the universal ribosomal protein uL13 family. Part of the 50S ribosomal subunit.

This protein is one of the early assembly proteins of the 50S ribosomal subunit, although it is not seen to bind rRNA by itself. It is important during the early stages of 50S assembly. The protein is Large ribosomal subunit protein uL13 of Saccharolobus solfataricus (strain ATCC 35092 / DSM 1617 / JCM 11322 / P2) (Sulfolobus solfataricus).